Here is a 39-residue protein sequence, read N- to C-terminus: Photosystem II reaction center protein L (39 aa).

A helical membrane pass occupies residues 18–38 (SLYLGLLVVFTTGILFSSYFF).

It belongs to the PsbL family. As to quaternary structure, PSII is composed of 1 copy each of membrane proteins PsbA, PsbB, PsbC, PsbD, PsbE, PsbF, PsbH, PsbI, PsbJ, PsbK, PsbL, PsbM, PsbT, PsbX, PsbY, PsbZ, Psb30/Ycf12, peripheral proteins PsbO, CyanoQ (PsbQ), PsbU, PsbV and a large number of cofactors. It forms dimeric complexes.

Its subcellular location is the cellular thylakoid membrane. One of the components of the core complex of photosystem II (PSII). PSII is a light-driven water:plastoquinone oxidoreductase that uses light energy to abstract electrons from H(2)O, generating O(2) and a proton gradient subsequently used for ATP formation. It consists of a core antenna complex that captures photons, and an electron transfer chain that converts photonic excitation into a charge separation. This subunit is found at the monomer-monomer interface and is required for correct PSII assembly and/or dimerization. This Synechococcus sp. (strain WH7803) protein is Photosystem II reaction center protein L.